Reading from the N-terminus, the 155-residue chain is MGRSRSRSPRRERRRSRSTSRERERRRRERSRSRERDRRRSRSRSPHRRRSRSPRRHRSTSPSPSRLKERRDEEKKETKETKSKERQITEEDLEGKTEEEIEMMKLMGFASFDSTKGKKVDGSVNAYAINVSQKRKYRQYMNRKGGFNRPLDFIA.

2 stretches are compositionally biased toward basic residues: residues 1-31 (MGRS…RERS) and 39-59 (RRSR…RHRS). Positions 1 to 97 (MGRSRSRSPR…ITEEDLEGKT (97 aa)) are disordered. A phosphoserine mark is found at S61 and S65. Basic and acidic residues predominate over residues 66–97 (RLKERRDEEKKETKETKSKERQITEEDLEGKT). Residues S111, S114, and S132 each carry the phosphoserine modification.

The protein belongs to the SNUT3 family. Part of a tri-snRNP complex. Phosphorylated in vitro by snRNP-associated protein kinase.

Its subcellular location is the nucleus. Functionally, may play a role in mRNA splicing. This chain is U4/U6.U5 small nuclear ribonucleoprotein 27 kDa protein (SNRNP27), found in Homo sapiens (Human).